Consider the following 328-residue polypeptide: Pantothenate kinase (328 aa).

The span at 1 to 12 (MAAPLNAQTRAP) shows a compositional bias: polar residues. The segment at 1–22 (MAAPLNAQTRAPQATGRAPDFS) is disordered. 113-120 (GSVAVGKS) contributes to the ATP binding site.

It belongs to the prokaryotic pantothenate kinase family.

It is found in the cytoplasm. The enzyme catalyses (R)-pantothenate + ATP = (R)-4'-phosphopantothenate + ADP + H(+). The protein operates within cofactor biosynthesis; coenzyme A biosynthesis; CoA from (R)-pantothenate: step 1/5. The polypeptide is Pantothenate kinase (Corynebacterium efficiens (strain DSM 44549 / YS-314 / AJ 12310 / JCM 11189 / NBRC 100395)).